The sequence spans 29 residues: HSQGTFTSDYSKYLDTRRAQDFVQWLMST.

This sequence belongs to the glucagon family.

It localises to the secreted. In terms of biological role, glucagon plays a key role in glucose metabolism and homeostasis. Regulates blood glucose by increasing gluconeogenesis and decreasing glycolysis. This chain is Glucagon (GCG), found in Struthio camelus (Common ostrich).